Consider the following 437-residue polypeptide: tRNA-2-methylthio-N(6)-dimethylallyladenosine synthase (437 aa).

In terms of domain architecture, MTTase N-terminal spans 1–115; the sequence is MKVYIETMGC…ISQVIHKEKA (115 aa). Residues Cys-10, Cys-46, Cys-78, Cys-148, Cys-152, and Cys-155 each coordinate [4Fe-4S] cluster. The Radical SAM core domain occupies 134 to 367; the sequence is KKAQIRSLLN…QNRHKEILEE (234 aa). In terms of domain architecture, TRAM spans 370 to 436; the sequence is KLEVGKTHVV…KGRLMATTKG (67 aa).

This sequence belongs to the methylthiotransferase family. MiaB subfamily. As to quaternary structure, monomer. Requires [4Fe-4S] cluster as cofactor.

Its subcellular location is the cytoplasm. It catalyses the reaction N(6)-dimethylallyladenosine(37) in tRNA + (sulfur carrier)-SH + AH2 + 2 S-adenosyl-L-methionine = 2-methylsulfanyl-N(6)-dimethylallyladenosine(37) in tRNA + (sulfur carrier)-H + 5'-deoxyadenosine + L-methionine + A + S-adenosyl-L-homocysteine + 2 H(+). Catalyzes the methylthiolation of N6-(dimethylallyl)adenosine (i(6)A), leading to the formation of 2-methylthio-N6-(dimethylallyl)adenosine (ms(2)i(6)A) at position 37 in tRNAs that read codons beginning with uridine. In Helicobacter pylori (strain J99 / ATCC 700824) (Campylobacter pylori J99), this protein is tRNA-2-methylthio-N(6)-dimethylallyladenosine synthase.